The chain runs to 464 residues: UDP-N-acetylmuramate--L-alanine ligase (464 aa).

118–124 (GTHGKTT) contacts ATP.

Belongs to the MurCDEF family.

It is found in the cytoplasm. It catalyses the reaction UDP-N-acetyl-alpha-D-muramate + L-alanine + ATP = UDP-N-acetyl-alpha-D-muramoyl-L-alanine + ADP + phosphate + H(+). Its pathway is cell wall biogenesis; peptidoglycan biosynthesis. Cell wall formation. The sequence is that of UDP-N-acetylmuramate--L-alanine ligase from Dinoroseobacter shibae (strain DSM 16493 / NCIMB 14021 / DFL 12).